The following is a 336-amino-acid chain: Holliday junction branch migration complex subunit RuvB (336 aa).

The segment at 4-184 (ADRLISAGTT…FGIVQRLEFY (181 aa)) is large ATPase domain (RuvB-L). ATP is bound by residues Ile23, Arg24, Gly65, Lys68, Thr69, Thr70, 131 to 133 (EDY), Arg174, Tyr184, and Arg221. Thr69 serves as a coordination point for Mg(2+). A small ATPAse domain (RuvB-S) region spans residues 185 to 255 (QVPDLQYIVS…IAAQALDMLN (71 aa)). The tract at residues 258–336 (AEGFDYMDRK…HFGITPPEMP (79 aa)) is head domain (RuvB-H). Arg294, Arg313, and Arg318 together coordinate DNA.

The protein belongs to the RuvB family. Homohexamer. Forms an RuvA(8)-RuvB(12)-Holliday junction (HJ) complex. HJ DNA is sandwiched between 2 RuvA tetramers; dsDNA enters through RuvA and exits via RuvB. An RuvB hexamer assembles on each DNA strand where it exits the tetramer. Each RuvB hexamer is contacted by two RuvA subunits (via domain III) on 2 adjacent RuvB subunits; this complex drives branch migration. In the full resolvosome a probable DNA-RuvA(4)-RuvB(12)-RuvC(2) complex forms which resolves the HJ.

It localises to the cytoplasm. It catalyses the reaction ATP + H2O = ADP + phosphate + H(+). The RuvA-RuvB-RuvC complex processes Holliday junction (HJ) DNA during genetic recombination and DNA repair, while the RuvA-RuvB complex plays an important role in the rescue of blocked DNA replication forks via replication fork reversal (RFR). RuvA specifically binds to HJ cruciform DNA, conferring on it an open structure. The RuvB hexamer acts as an ATP-dependent pump, pulling dsDNA into and through the RuvAB complex. RuvB forms 2 homohexamers on either side of HJ DNA bound by 1 or 2 RuvA tetramers; 4 subunits per hexamer contact DNA at a time. Coordinated motions by a converter formed by DNA-disengaged RuvB subunits stimulates ATP hydrolysis and nucleotide exchange. Immobilization of the converter enables RuvB to convert the ATP-contained energy into a lever motion, pulling 2 nucleotides of DNA out of the RuvA tetramer per ATP hydrolyzed, thus driving DNA branch migration. The RuvB motors rotate together with the DNA substrate, which together with the progressing nucleotide cycle form the mechanistic basis for DNA recombination by continuous HJ branch migration. Branch migration allows RuvC to scan DNA until it finds its consensus sequence, where it cleaves and resolves cruciform DNA. The chain is Holliday junction branch migration complex subunit RuvB from Shigella sonnei (strain Ss046).